We begin with the raw amino-acid sequence, 319 residues long: Acetyl-coenzyme A carboxylase carboxyl transferase subunit alpha (319 aa).

The CoA carboxyltransferase C-terminal domain maps to N35–D296.

The protein belongs to the AccA family. In terms of assembly, acetyl-CoA carboxylase is a heterohexamer composed of biotin carboxyl carrier protein (AccB), biotin carboxylase (AccC) and two subunits each of ACCase subunit alpha (AccA) and ACCase subunit beta (AccD).

It localises to the cytoplasm. The enzyme catalyses N(6)-carboxybiotinyl-L-lysyl-[protein] + acetyl-CoA = N(6)-biotinyl-L-lysyl-[protein] + malonyl-CoA. It participates in lipid metabolism; malonyl-CoA biosynthesis; malonyl-CoA from acetyl-CoA: step 1/1. Functionally, component of the acetyl coenzyme A carboxylase (ACC) complex. First, biotin carboxylase catalyzes the carboxylation of biotin on its carrier protein (BCCP) and then the CO(2) group is transferred by the carboxyltransferase to acetyl-CoA to form malonyl-CoA. In Cronobacter sakazakii (strain ATCC BAA-894) (Enterobacter sakazakii), this protein is Acetyl-coenzyme A carboxylase carboxyl transferase subunit alpha.